A 515-amino-acid chain; its full sequence is Cyclic AMP receptor-like protein G (515 aa).

Topologically, residues Met-1–Ser-16 are extracellular. Residues Ile-17–Tyr-37 traverse the membrane as a helical segment. The Cytoplasmic segment spans residues Ile-38–Leu-50. Residues Ile-51–Ile-71 traverse the membrane as a helical segment. Topologically, residues Gln-72–Ser-92 are extracellular. A helical transmembrane segment spans residues Leu-93 to Ile-113. Residues Gln-114–Lys-129 lie on the Cytoplasmic side of the membrane. The helical transmembrane segment at Tyr-130–Ser-150 threads the bilayer. The Extracellular portion of the chain corresponds to Tyr-151–His-164. Residues Leu-165–Leu-185 form a helical membrane-spanning segment. Residues Thr-186 to Thr-276 lie on the Cytoplasmic side of the membrane. A helical transmembrane segment spans residues Ser-277 to Leu-297. Topologically, residues Lys-298–Tyr-306 are extracellular. A helical transmembrane segment spans residues Ile-307 to Gly-327. Topologically, residues Val-328 to Lys-515 are cytoplasmic. The span at Asn-362–Asn-375 shows a compositional bias: low complexity. 2 disordered regions span residues Asn-362–Ile-409 and Asn-469–Lys-515. Acidic residues predominate over residues Ser-385–Asn-396. Low complexity-rich tracts occupy residues Asn-397–Tyr-407 and Asn-469–Asn-504.

Belongs to the G-protein coupled receptor 5 family.

Its subcellular location is the membrane. Receptor for cAMP. The protein is Cyclic AMP receptor-like protein G (crlG) of Dictyostelium discoideum (Social amoeba).